The chain runs to 445 residues: Phosphoglucosamine mutase (445 aa).

S102 serves as the catalytic Phosphoserine intermediate. The Mg(2+) site is built by S102, D241, D243, and D245. At S102 the chain carries Phosphoserine.

The protein belongs to the phosphohexose mutase family. The cofactor is Mg(2+). Post-translationally, activated by phosphorylation.

It catalyses the reaction alpha-D-glucosamine 1-phosphate = D-glucosamine 6-phosphate. Catalyzes the conversion of glucosamine-6-phosphate to glucosamine-1-phosphate. The chain is Phosphoglucosamine mutase from Cronobacter sakazakii (strain ATCC BAA-894) (Enterobacter sakazakii).